The primary structure comprises 692 residues: Elongation factor G (692 aa).

Residues 8-282 (EKVRNIGIAA…AVVDYLPAPS (275 aa)) enclose the tr-type G domain. Residues 17-24 (AHIDAGKT), 81-85 (DTPGH), and 135-138 (NKMD) contribute to the GTP site.

The protein belongs to the TRAFAC class translation factor GTPase superfamily. Classic translation factor GTPase family. EF-G/EF-2 subfamily.

The protein resides in the cytoplasm. Its function is as follows. Catalyzes the GTP-dependent ribosomal translocation step during translation elongation. During this step, the ribosome changes from the pre-translocational (PRE) to the post-translocational (POST) state as the newly formed A-site-bound peptidyl-tRNA and P-site-bound deacylated tRNA move to the P and E sites, respectively. Catalyzes the coordinated movement of the two tRNA molecules, the mRNA and conformational changes in the ribosome. In Nostoc punctiforme (strain ATCC 29133 / PCC 73102), this protein is Elongation factor G.